Reading from the N-terminus, the 75-residue chain is DNA-directed RNA polymerase subunit omega (75 aa).

It belongs to the RNA polymerase subunit omega family. In terms of assembly, the RNAP catalytic core consists of 2 alpha, 1 beta, 1 beta' and 1 omega subunit. When a sigma factor is associated with the core the holoenzyme is formed, which can initiate transcription.

It carries out the reaction RNA(n) + a ribonucleoside 5'-triphosphate = RNA(n+1) + diphosphate. Its function is as follows. Promotes RNA polymerase assembly. Latches the N- and C-terminal regions of the beta' subunit thereby facilitating its interaction with the beta and alpha subunits. The sequence is that of DNA-directed RNA polymerase subunit omega from Lysinibacillus sphaericus (strain C3-41).